The following is a 253-amino-acid chain: uncharacterized protein (253 aa).

The first 19 residues, 1–19 (MRYLKKVTIYISLLILVSG), serve as a signal peptide directing secretion. Cys-20 carries the N-palmitoyl cysteine lipid modification. Cys-20 is lipidated: S-diacylglycerol cysteine.

It belongs to the staphylococcal tandem lipoprotein family.

It is found in the cell membrane. This is an uncharacterized protein from Staphylococcus epidermidis (strain ATCC 35984 / DSM 28319 / BCRC 17069 / CCUG 31568 / BM 3577 / RP62A).